The sequence spans 435 residues: GTPase Der (435 aa).

2 EngA-type G domains span residues 4 to 167 (PIVA…SPDA) and 175 to 350 (ISFS…ENKN). Residues 10–17 (GQPNVGKS), 57–61 (DTGGI), 119–122 (NKAD), 181–188 (GRPNVGKS), 228–232 (DTAGI), and 293–296 (NKWD) contribute to the GTP site. One can recognise a KH-like domain in the interval 351–435 (QRIQSSVLND…PIKILPRKRK (85 aa)).

It belongs to the TRAFAC class TrmE-Era-EngA-EngB-Septin-like GTPase superfamily. EngA (Der) GTPase family. Associates with the 50S ribosomal subunit.

In terms of biological role, GTPase that plays an essential role in the late steps of ribosome biogenesis. The chain is GTPase Der from Lactobacillus delbrueckii subsp. bulgaricus (strain ATCC 11842 / DSM 20081 / BCRC 10696 / JCM 1002 / NBRC 13953 / NCIMB 11778 / NCTC 12712 / WDCM 00102 / Lb 14).